Consider the following 342-residue polypeptide: S-adenosylmethionine:tRNA ribosyltransferase-isomerase (342 aa).

This sequence belongs to the QueA family. In terms of assembly, monomer.

Its subcellular location is the cytoplasm. The enzyme catalyses 7-aminomethyl-7-carbaguanosine(34) in tRNA + S-adenosyl-L-methionine = epoxyqueuosine(34) in tRNA + adenine + L-methionine + 2 H(+). Its pathway is tRNA modification; tRNA-queuosine biosynthesis. Its function is as follows. Transfers and isomerizes the ribose moiety from AdoMet to the 7-aminomethyl group of 7-deazaguanine (preQ1-tRNA) to give epoxyqueuosine (oQ-tRNA). The chain is S-adenosylmethionine:tRNA ribosyltransferase-isomerase from Campylobacter jejuni subsp. jejuni serotype O:6 (strain 81116 / NCTC 11828).